Here is a 116-residue protein sequence, read N- to C-terminus: Regulator of ribonuclease activity B (116 aa).

It belongs to the RraB family. In terms of assembly, interacts with the C-terminal region of Rne.

It localises to the cytoplasm. Its function is as follows. Globally modulates RNA abundance by binding to RNase E (Rne) and regulating its endonucleolytic activity. Can modulate Rne action in a substrate-dependent manner by altering the composition of the degradosome. This chain is Regulator of ribonuclease activity B, found in Colwellia psychrerythraea (strain 34H / ATCC BAA-681) (Vibrio psychroerythus).